Consider the following 607-residue polypeptide: Glutamine--fructose-6-phosphate aminotransferase [isomerizing] (607 aa).

Cysteine 2 acts as the Nucleophile; for GATase activity in catalysis. The Glutamine amidotransferase type-2 domain maps to 2-217 (CGIIGIIGND…DGDWAVLTRN (216 aa)). SIS domains lie at 283–422 (IGID…ARGA) and 455–597 (VCHD…VDQP). Catalysis depends on lysine 602, which acts as the For Fru-6P isomerization activity.

Homodimer.

It is found in the cytoplasm. It carries out the reaction D-fructose 6-phosphate + L-glutamine = D-glucosamine 6-phosphate + L-glutamate. Catalyzes the first step in hexosamine metabolism, converting fructose-6P into glucosamine-6P using glutamine as a nitrogen source. The polypeptide is Glutamine--fructose-6-phosphate aminotransferase [isomerizing] (Brucella melitensis biotype 1 (strain ATCC 23456 / CCUG 17765 / NCTC 10094 / 16M)).